The following is a 431-amino-acid chain: Glutamyl-tRNA(Gln) amidotransferase subunit A (431 aa).

Catalysis depends on charge relay system residues Lys-55 and Ser-130. Ser-154 acts as the Acyl-ester intermediate in catalysis.

Belongs to the amidase family. GatA subfamily. Heterotrimer of A, B and C subunits.

The catalysed reaction is L-glutamyl-tRNA(Gln) + L-glutamine + ATP + H2O = L-glutaminyl-tRNA(Gln) + L-glutamate + ADP + phosphate + H(+). In terms of biological role, allows the formation of correctly charged Gln-tRNA(Gln) through the transamidation of misacylated Glu-tRNA(Gln) in organisms which lack glutaminyl-tRNA synthetase. The reaction takes place in the presence of glutamine and ATP through an activated gamma-phospho-Glu-tRNA(Gln). The polypeptide is Glutamyl-tRNA(Gln) amidotransferase subunit A (Methanococcus maripaludis (strain C6 / ATCC BAA-1332)).